The chain runs to 205 residues: Fibrillarin-like rRNA/tRNA 2'-O-methyltransferase (205 aa).

S-adenosyl-L-methionine is bound by residues 60 to 61 (ST), 76 to 77 (EF), 101 to 102 (DA), and 121 to 124 (DIAQ).

It belongs to the methyltransferase superfamily. Fibrillarin family. As to quaternary structure, interacts with nop5. Component of box C/D small ribonucleoprotein (sRNP) particles that contain rpl7ae, FlpA and nop5, plus a guide RNA.

Involved in pre-rRNA and tRNA processing. Utilizes the methyl donor S-adenosyl-L-methionine to catalyze the site-specific 2'-hydroxyl methylation of ribose moieties in rRNA and tRNA. Site specificity is provided by a guide RNA that base pairs with the substrate. Methylation occurs at a characteristic distance from the sequence involved in base pairing with the guide RNA. This is Fibrillarin-like rRNA/tRNA 2'-O-methyltransferase from Methanospirillum hungatei JF-1 (strain ATCC 27890 / DSM 864 / NBRC 100397 / JF-1).